The following is a 258-amino-acid chain: MLLTIDVGNSDTVFGLFEGEDLLEHWRVSSKGRRTADEWAVVVQNLLHFDSLIHGDIDGIAMCCTVPMVQNEMRQMFRRHYGDVPAVIVEPGVKTGVPIRMDNPKEVGSDRIVNALAAARLYGGPAVVVDFGTATTFDAVSARGEYVGGAIAPGIDISVEALSKRGAQLHMVEIIKPRSVIAKNTTEALRSGIVYGFAGQVDGIVDRMAQELTDDVDDVTVVATGGLAPLVVDECETVDVHEPWLTLIGLRMIFERNT.

6 to 13 contributes to the ATP binding site; that stretch reads DVGNSDTV. 108–111 provides a ligand contact to substrate; the sequence is GSDR. D110 functions as the Proton acceptor in the catalytic mechanism. A K(+)-binding site is contributed by D130. T133 is an ATP binding site. T185 contributes to the substrate binding site.

This sequence belongs to the type III pantothenate kinase family. In terms of assembly, homodimer. NH4(+) serves as cofactor. Requires K(+) as cofactor.

The protein resides in the cytoplasm. It carries out the reaction (R)-pantothenate + ATP = (R)-4'-phosphopantothenate + ADP + H(+). Its pathway is cofactor biosynthesis; coenzyme A biosynthesis; CoA from (R)-pantothenate: step 1/5. Functionally, catalyzes the phosphorylation of pantothenate (Pan), the first step in CoA biosynthesis. This chain is Type III pantothenate kinase, found in Thermobifida fusca (strain YX).